Here is a 686-residue protein sequence, read N- to C-terminus: MFYVKVMPALQKACEELQNQWSAKSGKWPVPETPLVAVETRRSERWPHPYLGLLPGVAAYSSTLEDYCHLYNPYIDALTRCDLGQTHRRVATQPVLSDQLCQQLKKLFSCPRNTSVKAKLEFEAAVRTHQALDNSQVFLELKTFVLNLSAFLNKRYSDRSSHIELFQKQLIMHTFFFLVSIKAPELCEKFCNIFKLYFNIDTMDQATLDIFKQKASVFLIPRRHGKTWIVVAIISILLASVQDLRIGYVAHQKHVANAVFTEVINTLHTFFPGKYMDVKKENGTIIFGLPNKKPSTLLCATCFNKNSIRGQTFQLLFVDEANFIKKDALPTILGFMLQKDAKIIFISSSNSSDQSTSFLYNLKGASERMLNVVSYVCSNHKEDFSMQDGLISCPCYSLHVPSYISIDEQIKTTTNLFLDGVFDTELMGDSSCGTLSTFQIISESALSQFELCRIDTASPQVQAHLNSTVHMYIDPAFTNNLDASGTGISVIGRLGAKTKVILGCEHFFLQKLTGTAALQIASCATSLLRSVVIIHPMIKCAQITIEGNSSQDSAVAIANFIDECAPIPVTFYHQSDKTKGVLCPLYLLGQEKAVAFESFIYAMNLGLCKASQLIVSHTIKLSFDPVTYLLEQVRAIKCQSLRDGSHTYHAKQKNLSDDLLVSVVMSLYLSSANTLPFKPLHIERFF.

A Walker A motif motif is present at residues 220-227 (IPRRHGKT). The short motif at 315–320 (LLFVDE) is the Walker B motif element. Catalysis depends on glutamate 320, which acts as the For ATPase activity. Catalysis depends on for nuclease activity residues aspartate 474, glutamate 546, and aspartate 658.

Belongs to the herpesviridae TRM3 protein family. As to quaternary structure, interacts with the terminase subunits TRM1 and TRM2. Interacts with portal protein.

The protein resides in the host nucleus. Its function is as follows. Component of the molecular motor that translocates viral genomic DNA in empty capsid during DNA packaging. Forms a tripartite terminase complex together with TRM1 and TRM2 in the host cytoplasm. Once the complex reaches the host nucleus, it interacts with the capsid portal vertex. This portal forms a ring in which genomic DNA is translocated into the capsid. TRM3 carries an RNase H-like nuclease activity that plays an important role for the cleavage of concatemeric viral DNA into unit length genomes. This is Tripartite terminase subunit 3 from Alcelaphine herpesvirus 1 (strain C500) (AlHV-1).